The primary structure comprises 322 residues: Mas-related G-protein coupled receptor member X4 (322 aa).

The Extracellular portion of the chain corresponds to 1–31; the sequence is MDPTVPVFGTKLTPINGREETPCYNQTLSFT. An N-linked (GlcNAc...) asparagine glycan is attached at Asn25. A helical membrane pass occupies residues 32-52; that stretch reads VLTCIISLVGLTGNAVVLWLL. Over 53 to 60 the chain is Cytoplasmic; it reads GYRMRRNA. Residues 61–81 form a helical membrane-spanning segment; the sequence is VSIYILNLAAADFLFLSFQII. Over 82-96 the chain is Extracellular; the sequence is RLPLRLINISHLIRK. Asn89 carries N-linked (GlcNAc...) asparagine glycosylation. Residues 97–117 traverse the membrane as a helical segment; that stretch reads ILVSVMTFPYFTGLSMLSAIS. Topologically, residues 118–137 are cytoplasmic; that stretch reads TERCLSVLWPIWYRCRRPTH. The helical transmembrane segment at 138-158 threads the bilayer; sequence LSAVVCVLLWGLSLLFSMLEW. Over 159 to 177 the chain is Extracellular; it reads RFCDFLFSGADSSWCETSD. The helical transmembrane segment at 178–198 threads the bilayer; the sequence is FIPVAWLIFLCVVLCVSSLVL. Residues 199 to 218 lie on the Cytoplasmic side of the membrane; that stretch reads LVRILCGSRKMPLTRLYVTI. The chain crosses the membrane as a helical span at residues 219 to 239; the sequence is LLTVLVFLLCGLPFGILGALI. The Extracellular segment spans residues 240–254; the sequence is YRMHLNLEVLYCHVY. A helical transmembrane segment spans residues 255-275; the sequence is LVCMSLSSLNSSANPIIYFFV. Residues 276–322 lie on the Cytoplasmic side of the membrane; sequence GSFRQRQNRQNLKLVLQRALQDKPEVDKGEGQLPEESLELSGSRLGP. The disordered stretch occupies residues 299–322; the sequence is PEVDKGEGQLPEESLELSGSRLGP.

The protein belongs to the G-protein coupled receptor 1 family. Mas subfamily. In terms of tissue distribution, uniquely localized in a subset of small dorsal root and trigeminal sensory neurons.

Its subcellular location is the cell membrane. In terms of biological role, orphan receptor. Probably involved in the function of nociceptive neurons. May regulate nociceptor function and/or development, including the sensation or modulation of pain. Potently activated by enkephalins. In Homo sapiens (Human), this protein is Mas-related G-protein coupled receptor member X4 (MRGPRX4).